Consider the following 505-residue polypeptide: Calcium/calmodulin-dependent protein kinase kinase 1 (505 aa).

The disordered stretch occupies residues 27–66 (HLEEAEEGPEPASNGVDPPPRARAASVIPGSASRPTPVRP). Phosphoserine occurs at positions 67 and 74. An Asymmetric dimethylarginine modification is found at Arg78. At Ser100 the chain carries Phosphoserine. Thr108 is modified (phosphothreonine). In terms of domain architecture, Protein kinase spans 128 to 409 (YKLQSEIGKG…VSDIKLHPWV (282 aa)). ATP is bound by residues 134–142 (IGKGAYGVV) and Lys157. The interval 167 to 189 (QYGFPRRPPPRGSQAPQGGPAKQ) is RP domain. The active-site Proton acceptor is the Asp275. Residues 435–440 (KNSVKL) are autoinhibitory domain. Residues 438 to 463 (VKLIPSWTTVILVKSMLRKRSFGNPF) form a calmodulin-binding region. 3 positions are modified to phosphoserine: Ser458, Ser475, and Ser492. Residues 460–505 (GNPFEPQARREERSMSAPGNLLLKEGCGEGGKSPELPGVQEDEAAS) are disordered.

The protein belongs to the protein kinase superfamily. Ser/Thr protein kinase family. Interacts with CAMK4 and calmodulin. In terms of processing, appears to be autophosphorylated. Phosphorylated at multiple sites by PRCAKA/PKA. Phosphorylation of Ser-458 is blocked upon binding to Ca(2+)/calmodulin. May be phosphorylated by CAMK1 and CAMK4. As to expression, mostly expressed in the brain with higher levels in cortex and hippocampus. Lower expression levels were detected in striatum, nucleus accumbens and cerebellum (at protein level). Abundant in forebrain, weaker in cerebellum and also detected in thymus and spleen.

Its subcellular location is the cytoplasm. It is found in the nucleus. It catalyses the reaction L-seryl-[protein] + ATP = O-phospho-L-seryl-[protein] + ADP + H(+). The enzyme catalyses L-threonyl-[protein] + ATP = O-phospho-L-threonyl-[protein] + ADP + H(+). Its activity is regulated as follows. Activated by Ca(2+)/calmodulin. Binding of calmodulin may relieve intrasteric autoinhibition. Partially inhibited upon phosphorylation by PRCAKA/PKA. May be regulated through phosphorylation by CAMK1 and CAMK4. Calcium/calmodulin-dependent protein kinase that belongs to a proposed calcium-triggered signaling cascade involved in a number of cellular processes. Phosphorylates CAMK1, CAMK1D, CAMK1G and CAMK4. Involved in regulating cell apoptosis. Promotes cell survival by phosphorylating AKT1/PKB that inhibits pro-apoptotic BAD/Bcl2-antagonist of cell death. The sequence is that of Calcium/calmodulin-dependent protein kinase kinase 1 (Camkk1) from Rattus norvegicus (Rat).